A 273-amino-acid chain; its full sequence is Large ribosomal subunit protein uL2c (273 aa).

It belongs to the universal ribosomal protein uL2 family. As to quaternary structure, part of the 50S ribosomal subunit.

It is found in the plastid. The protein localises to the apicoplast. This is Large ribosomal subunit protein uL2c (rpl2) from Eimeria tenella (Coccidian parasite).